The chain runs to 261 residues: Undecaprenyl-diphosphatase (261 aa).

The next 6 helical transmembrane spans lie at 39–59 (NVLLFDILVHLGTLVPLLIIF), 76–96 (LLIIAGTVPTALIGLGFKDFF), 99–119 (LFVSGSTLGIEFIITGLILWL), 173–193 (AAKFSFLLSIPAILGAAVLDL), 206–226 (IDLMPFIVGFFAAMLSGYFAV), and 238–258 (LTWFSYYVWILGVTILVLQAA).

It belongs to the UppP family.

The protein resides in the cell membrane. The catalysed reaction is di-trans,octa-cis-undecaprenyl diphosphate + H2O = di-trans,octa-cis-undecaprenyl phosphate + phosphate + H(+). In terms of biological role, catalyzes the dephosphorylation of undecaprenyl diphosphate (UPP). Confers resistance to bacitracin. In Carboxydothermus hydrogenoformans (strain ATCC BAA-161 / DSM 6008 / Z-2901), this protein is Undecaprenyl-diphosphatase.